The primary structure comprises 194 residues: Putative 3-methyladenine DNA glycosylase (194 aa).

Belongs to the DNA glycosylase MPG family.

The protein is Putative 3-methyladenine DNA glycosylase of Synechococcus elongatus (strain ATCC 33912 / PCC 7942 / FACHB-805) (Anacystis nidulans R2).